Consider the following 105-residue polypeptide: Probable guanidinium efflux system subunit GdnD (105 aa).

Helical transmembrane passes span 1 to 21, 32 to 52, 59 to 79, and 85 to 105; these read MLHWISLLCAGCLEMAGVALM, WVLLIIVGFAASFSLLSYAME, AYAVWTGIGTAGGALIGILFY, and AKRIFFIALILCSAVGLKILS.

The protein belongs to the drug/metabolite transporter (DMT) superfamily. Small multidrug resistance (SMR) (TC 2.A.7.1) family. YkkC/YkkD subfamily. The efflux pump is composed of GdnC and GdnD.

The protein localises to the cell membrane. In terms of biological role, probably involved in guanidinium transport. In vitro, confers resistance to a broad range of toxic compounds such as cationic dyes, neutral and anionic antimicrobials. In Bacillus subtilis (strain 168), this protein is Probable guanidinium efflux system subunit GdnD.